The primary structure comprises 696 residues: DNA ligase (696 aa).

NAD(+)-binding positions include 36 to 40 (DAEYD), 85 to 86 (SL), and Glu123. Lys125 serves as the catalytic N6-AMP-lysine intermediate. NAD(+)-binding residues include Arg146, Glu181, Lys319, and Lys343. The Zn(2+) site is built by Cys437, Cys440, Cys455, and Cys461. Residues 618 to 696 (PEGTSLAGKT…EDGLKALLGL (79 aa)) enclose the BRCT domain.

The protein belongs to the NAD-dependent DNA ligase family. LigA subfamily. Requires Mg(2+) as cofactor. Mn(2+) is required as a cofactor.

It catalyses the reaction NAD(+) + (deoxyribonucleotide)n-3'-hydroxyl + 5'-phospho-(deoxyribonucleotide)m = (deoxyribonucleotide)n+m + AMP + beta-nicotinamide D-nucleotide.. In terms of biological role, DNA ligase that catalyzes the formation of phosphodiester linkages between 5'-phosphoryl and 3'-hydroxyl groups in double-stranded DNA using NAD as a coenzyme and as the energy source for the reaction. It is essential for DNA replication and repair of damaged DNA. The protein is DNA ligase of Bordetella bronchiseptica (strain ATCC BAA-588 / NCTC 13252 / RB50) (Alcaligenes bronchisepticus).